A 209-amino-acid chain; its full sequence is Orotate phosphoribosyltransferase (209 aa).

5-phospho-alpha-D-ribose 1-diphosphate-binding positions include Arg96, Lys100, His102, and 122-130 (EDLISTGGS). Ser126 is an orotate binding site.

Belongs to the purine/pyrimidine phosphoribosyltransferase family. PyrE subfamily. In terms of assembly, homodimer. Mg(2+) serves as cofactor.

The catalysed reaction is orotidine 5'-phosphate + diphosphate = orotate + 5-phospho-alpha-D-ribose 1-diphosphate. It participates in pyrimidine metabolism; UMP biosynthesis via de novo pathway; UMP from orotate: step 1/2. Functionally, catalyzes the transfer of a ribosyl phosphate group from 5-phosphoribose 1-diphosphate to orotate, leading to the formation of orotidine monophosphate (OMP). The chain is Orotate phosphoribosyltransferase from Listeria monocytogenes serotype 4b (strain F2365).